Reading from the N-terminus, the 940-residue chain is Isoleucine--tRNA ligase (940 aa).

The 'HIGH' region signature appears at 58–68; the sequence is PYANGDIHIGH. Glutamate 564 is a binding site for L-isoleucyl-5'-AMP. The short motif at 605 to 609 is the 'KMSKS' region element; sequence KMSKS. Lysine 608 contributes to the ATP binding site. The Zn(2+) site is built by cysteine 903, cysteine 906, cysteine 923, and cysteine 926.

It belongs to the class-I aminoacyl-tRNA synthetase family. IleS type 1 subfamily. As to quaternary structure, monomer. Zn(2+) serves as cofactor.

Its subcellular location is the cytoplasm. The enzyme catalyses tRNA(Ile) + L-isoleucine + ATP = L-isoleucyl-tRNA(Ile) + AMP + diphosphate. Functionally, catalyzes the attachment of isoleucine to tRNA(Ile). As IleRS can inadvertently accommodate and process structurally similar amino acids such as valine, to avoid such errors it has two additional distinct tRNA(Ile)-dependent editing activities. One activity is designated as 'pretransfer' editing and involves the hydrolysis of activated Val-AMP. The other activity is designated 'posttransfer' editing and involves deacylation of mischarged Val-tRNA(Ile). The sequence is that of Isoleucine--tRNA ligase from Shewanella piezotolerans (strain WP3 / JCM 13877).